The following is a 250-amino-acid chain: Ribosomal RNA-processing protein 15 (250 aa).

Residues 1-27 (MGSKHRVDTKDKKRTRKNAEFGREKRN) show a composition bias toward basic and acidic residues. Residues 1 to 101 (MGSKHRVDTK…NSKHDDGSTG (101 aa)) are disordered. 2 stretches are compositionally biased toward acidic residues: residues 43-53 (MEGDEAEEDEQ) and 67-83 (EQSD…EDDD). Ser-69 is subject to Phosphoserine.

This sequence belongs to the RRP15 family.

The protein localises to the nucleus. Its subcellular location is the nucleolus. Its function is as follows. Constituent of pre-60S ribosomal particles. Required for large subunit rRNA maturation, in particular processing of the 27S pre-rRNA at the A3 and B1 sites to yield 5.8S and 25S rRNA. This chain is Ribosomal RNA-processing protein 15, found in Saccharomyces cerevisiae (strain ATCC 204508 / S288c) (Baker's yeast).